The following is a 199-amino-acid chain: uncharacterized protein (199 aa).

This sequence to U.parvum UU376.

This is an uncharacterized protein from Ureaplasma parvum serovar 3 (strain ATCC 700970).